The following is a 563-amino-acid chain: Secreted lipase ARB07186/07185 (563 aa).

The signal sequence occupies residues 1–20 (MAKYDFVMLWILTLTAAIAA). A disulfide bridge connects residues cysteine 83 and cysteine 101. Serine 215 (acyl-ester intermediate) is an active-site residue. An intrachain disulfide couples cysteine 268 to cysteine 281.

This sequence belongs to the type-B carboxylesterase/lipase family.

It localises to the secreted. The catalysed reaction is a triacylglycerol + H2O = a diacylglycerol + a fatty acid + H(+). This chain is Secreted lipase ARB07186/07185, found in Arthroderma benhamiae (strain ATCC MYA-4681 / CBS 112371) (Trichophyton mentagrophytes).